Reading from the N-terminus, the 238-residue chain is MKLEFSIYRYNPDVDNAPRMQDYTLEGEEGRDMMLLDALIQLKEKDPSLSFRRSCREGVCGSDGLNMNGKNGLACITPISALTQPGKKIVIRPLPGLPVIRDLVVDMGQFYAQYEKIKPYLLNNGQNPPAREHLQMPEQREKLDGLYECILCACCSTSCPSFWWNPDKFIGPAGLLAAYRFLIDSRDTETDSRLEGMSDAFSVFRCHSIMNCVSVCPKGLNPTRAIGHIKSMLLQRSA.

One can recognise a 2Fe-2S ferredoxin-type domain in the interval 1–97; that stretch reads MKLEFSIYRY…KIVIRPLPGL (97 aa). The [2Fe-2S] cluster site is built by cysteine 55, cysteine 60, and cysteine 75. Residues 139–169 form the 4Fe-4S ferredoxin-type domain; it reads QREKLDGLYECILCACCSTSCPSFWWNPDKF. Positions 149, 152, and 155 each coordinate [4Fe-4S] cluster. Cysteine 159 provides a ligand contact to [3Fe-4S] cluster. Residue tryptophan 164 coordinates a ubiquinone. [3Fe-4S] cluster-binding residues include cysteine 206 and cysteine 212. Cysteine 216 provides a ligand contact to [4Fe-4S] cluster.

Belongs to the succinate dehydrogenase/fumarate reductase iron-sulfur protein family. In terms of assembly, part of an enzyme complex containing four subunits: a flavoprotein, an iron-sulfur, cytochrome b-556, and a hydrophobic anchor protein. [2Fe-2S] cluster is required as a cofactor. It depends on [3Fe-4S] cluster as a cofactor. The cofactor is [4Fe-4S] cluster.

The enzyme catalyses a quinone + succinate = fumarate + a quinol. It functions in the pathway carbohydrate metabolism; tricarboxylic acid cycle; fumarate from succinate (bacterial route): step 1/1. In terms of biological role, two distinct, membrane-bound, FAD-containing enzymes are responsible for the catalysis of fumarate and succinate interconversion; the fumarate reductase is used in anaerobic growth, and the succinate dehydrogenase is used in aerobic growth. This Salmonella typhimurium (strain LT2 / SGSC1412 / ATCC 700720) protein is Succinate dehydrogenase iron-sulfur subunit (sdhB).